Reading from the N-terminus, the 266-residue chain is Small ribosomal subunit protein uS2 (266 aa).

The disordered stretch occupies residues 247–266; that stretch reads EGENNYSNNRSWNKPERTNN. A compositionally biased stretch (polar residues) spans 249-258; it reads ENNYSNNRSW.

Belongs to the universal ribosomal protein uS2 family.

This Mesoplasma florum (strain ATCC 33453 / NBRC 100688 / NCTC 11704 / L1) (Acholeplasma florum) protein is Small ribosomal subunit protein uS2.